The primary structure comprises 95 residues: Aspartyl/glutamyl-tRNA(Asn/Gln) amidotransferase subunit C (95 aa).

This sequence belongs to the GatC family. Heterotrimer of A, B and C subunits.

It carries out the reaction L-glutamyl-tRNA(Gln) + L-glutamine + ATP + H2O = L-glutaminyl-tRNA(Gln) + L-glutamate + ADP + phosphate + H(+). It catalyses the reaction L-aspartyl-tRNA(Asn) + L-glutamine + ATP + H2O = L-asparaginyl-tRNA(Asn) + L-glutamate + ADP + phosphate + 2 H(+). In terms of biological role, allows the formation of correctly charged Asn-tRNA(Asn) or Gln-tRNA(Gln) through the transamidation of misacylated Asp-tRNA(Asn) or Glu-tRNA(Gln) in organisms which lack either or both of asparaginyl-tRNA or glutaminyl-tRNA synthetases. The reaction takes place in the presence of glutamine and ATP through an activated phospho-Asp-tRNA(Asn) or phospho-Glu-tRNA(Gln). The protein is Aspartyl/glutamyl-tRNA(Asn/Gln) amidotransferase subunit C of Cytophaga hutchinsonii (strain ATCC 33406 / DSM 1761 / CIP 103989 / NBRC 15051 / NCIMB 9469 / D465).